The primary structure comprises 151 residues: Ribosome maturation factor RimP (151 aa).

Belongs to the RimP family.

The protein resides in the cytoplasm. In terms of biological role, required for maturation of 30S ribosomal subunits. The polypeptide is Ribosome maturation factor RimP (Vibrio atlanticus (strain LGP32) (Vibrio splendidus (strain Mel32))).